Reading from the N-terminus, the 61-residue chain is Pleurocidin-like peptide WF3 (61 aa).

The first 22 residues, 1–22, serve as a signal peptide directing secretion; it reads MKFTATFLVLSLVVLMAEPGEC. A propeptide spanning residues 48-61 is cleaved from the precursor; the sequence is YDEQQELNKRAVDE.

The protein belongs to the pleurocidin family.

Its subcellular location is the secreted. Antimicrobial peptide. This Pseudopleuronectes americanus (Winter flounder) protein is Pleurocidin-like peptide WF3 (ple3).